The primary structure comprises 276 residues: Diaminopimelate epimerase (276 aa).

Residues asparagine 13, glutamine 46, and asparagine 66 each contribute to the substrate site. Cysteine 75 acts as the Proton donor in catalysis. Residues 76 to 77, asparagine 159, asparagine 192, and 210 to 211 each bind substrate; these read GN and ER. Catalysis depends on cysteine 219, which acts as the Proton acceptor. 220 to 221 is a substrate binding site; the sequence is GS.

This sequence belongs to the diaminopimelate epimerase family. As to quaternary structure, homodimer.

The protein localises to the cytoplasm. The catalysed reaction is (2S,6S)-2,6-diaminopimelate = meso-2,6-diaminopimelate. The protein operates within amino-acid biosynthesis; L-lysine biosynthesis via DAP pathway; DL-2,6-diaminopimelate from LL-2,6-diaminopimelate: step 1/1. Catalyzes the stereoinversion of LL-2,6-diaminopimelate (L,L-DAP) to meso-diaminopimelate (meso-DAP), a precursor of L-lysine and an essential component of the bacterial peptidoglycan. The protein is Diaminopimelate epimerase of Pseudoalteromonas atlantica (strain T6c / ATCC BAA-1087).